Here is a 289-residue protein sequence, read N- to C-terminus: BTB/POZ domain-containing protein KCTD7 (289 aa).

The tract at residues 1 to 35 (MVVVTGREPDSRRQDGAMSSSDAEDDFLEPATPTA) is disordered. A BTB domain is found at 51-149 (EVVPLNIGGA…QLENMQPLKG (99 aa)).

Interacts with CUL3.

The protein resides in the cell membrane. The protein localises to the cytoplasm. It is found in the cytosol. Its function is as follows. May be involved in the control of excitability of cortical neurons. This is BTB/POZ domain-containing protein KCTD7 (KCTD7) from Homo sapiens (Human).